A 195-amino-acid chain; its full sequence is 7-methyl-GTP pyrophosphatase (195 aa).

Asp-70 acts as the Proton acceptor in catalysis.

Belongs to the Maf family. YceF subfamily. A divalent metal cation is required as a cofactor.

It is found in the cytoplasm. It carries out the reaction N(7)-methyl-GTP + H2O = N(7)-methyl-GMP + diphosphate + H(+). Its function is as follows. Nucleoside triphosphate pyrophosphatase that hydrolyzes 7-methyl-GTP (m(7)GTP). May have a dual role in cell division arrest and in preventing the incorporation of modified nucleotides into cellular nucleic acids. The sequence is that of 7-methyl-GTP pyrophosphatase from Shewanella sp. (strain MR-4).